The primary structure comprises 252 residues: 3-dehydroquinate dehydratase (252 aa).

Residues serine 21, 46–48, and arginine 82 contribute to the 3-dehydroquinate site; that span reads EWR. Catalysis depends on histidine 143, which acts as the Proton donor/acceptor. The Schiff-base intermediate with substrate role is filled by lysine 170. Residues arginine 213, serine 232, and glutamine 236 each coordinate 3-dehydroquinate.

Belongs to the type-I 3-dehydroquinase family. Homodimer.

The catalysed reaction is 3-dehydroquinate = 3-dehydroshikimate + H2O. The protein operates within metabolic intermediate biosynthesis; chorismate biosynthesis; chorismate from D-erythrose 4-phosphate and phosphoenolpyruvate: step 3/7. In terms of biological role, involved in the third step of the chorismate pathway, which leads to the biosynthesis of aromatic amino acids. Catalyzes the cis-dehydration of 3-dehydroquinate (DHQ) and introduces the first double bond of the aromatic ring to yield 3-dehydroshikimate. The polypeptide is 3-dehydroquinate dehydratase (Shigella sonnei (strain Ss046)).